Here is a 115-residue protein sequence, read N- to C-terminus: Ubiquitin-related modifier 1 (115 aa).

At Gly115 the chain carries 1-thioglycine. Gly115 is covalently cross-linked (Glycyl lysine isopeptide (Gly-Lys) (interchain with K-? in acceptor proteins)).

This sequence belongs to the URM1 family. C-terminal thiocarboxylation occurs in 2 steps, it is first acyl-adenylated (-COAMP) via the hesA/moeB/thiF part of UBA4, then thiocarboxylated (-COSH) via the rhodanese domain of UBA4.

It localises to the cytoplasm. It functions in the pathway tRNA modification; 5-methoxycarbonylmethyl-2-thiouridine-tRNA biosynthesis. Functionally, acts as a sulfur carrier required for 2-thiolation of mcm(5)S(2)U at tRNA wobble positions of cytosolic tRNA(Lys), tRNA(Glu) and tRNA(Gln). Serves as sulfur donor in tRNA 2-thiolation reaction by being thiocarboxylated (-COSH) at its C-terminus by the MOCS3 homolog UBA4. The sulfur is then transferred to tRNA to form 2-thiolation of mcm(5)S(2)U. Prior mcm(5) tRNA modification by the elongator complex is required for 2-thiolation. Also acts as a ubiquitin-like protein (UBL) that is covalently conjugated via an isopeptide bond to lysine residues of target proteins such as AHP1. The thiocarboxylated form serves as substrate for conjugation and oxidative stress specifically induces the formation of UBL-protein conjugates. This chain is Ubiquitin-related modifier 1, found in Coccidioides immitis (strain RS) (Valley fever fungus).